The primary structure comprises 490 residues: MFSIINPSDDFWTKDKYIMLTIKGPVEWEAEIPGISTDFFCKFSNVPVPHFRDMHSPGAPDIKWITACTKMIDVILNYWNNKTAVPTPAKWYAQAENKAGRPSLTLLIALDGIPTATIGKHTTEIRGVLIKDFFDGNAPKIDDWCTYAKTKKNGGGTQVFSLSYIPFALLQIIRPQFQWAWTNINELGDVCDEIHRKHIISHFNKKPNVKLMLFPKDGTNRISLKSKFLGTIEWLSDLGIVTEDAWIRRDVRSYMQLLTLTHGDVLIHRALSISKKRIRATRKAIDFIAHIDTDFEIYENPVYQLFCLQSFDPILAGTILYQWLSHRRGKKNTVSFIGPPGCGKSMLTGAILENIPLHGILHGSLNTKNLRAYGQVLVLWWKDISINFENFNIIKSLLGGQKIIFPINENDHVQIGPCPIIATSCVDIRSMVHSNIHKINLSQRVYNFTFDKVIPRNFPVIQKDDINQFLFWARNRSINCFIDYTVPKIL.

Positions 1–210 constitute a PV NS1-Nuc domain; it reads MFSIINPSDD…SHFNKKPNVK (210 aa). The 152-residue stretch at 312–463 folds into the SF3 helicase domain; that stretch reads DPILAGTILY…IPRNFPVIQK (152 aa). Residue 338 to 345 participates in ATP binding; that stretch reads GPPGCGKS.

It localises to the host nucleus. The polypeptide is Protein U94 (U94) (Human herpesvirus 6B (HHV-6 variant B)).